We begin with the raw amino-acid sequence, 116 residues long: UPF0102 protein Sala_0262 (116 aa).

Belongs to the UPF0102 family.

The protein is UPF0102 protein Sala_0262 of Sphingopyxis alaskensis (strain DSM 13593 / LMG 18877 / RB2256) (Sphingomonas alaskensis).